The sequence spans 380 residues: Serpin B7 (380 aa).

Phosphoserine is present on residues serine 217 and serine 223.

This sequence belongs to the serpin family. Ov-serpin subfamily. In terms of tissue distribution, predominantly expressed in mesangial cells. Expressed in the epidermis of the whole body.

Its subcellular location is the cytoplasm. In terms of biological role, might function as an inhibitor of Lys-specific proteases. Might influence the maturation of megakaryocytes via its action as a serpin. The protein is Serpin B7 (SERPINB7) of Homo sapiens (Human).